The following is a 235-amino-acid chain: Protein GMH1 homolog (235 aa).

The Cytoplasmic segment spans residues 1–54 (MSRSFRNGFRLLKLSQMDFERAWWDMANLFRAPRRVYRSITLRKQNINRYGRED). Residues 55–75 (FSFIVLFSCMIVISALLWALF) traverse the membrane as a helical segment. Topologically, residues 76–88 (YMNTPKGYVTTIT) are lumenal. Residues 89–109 (FMLFVDFGAVGVIMATMYYFI) traverse the membrane as a helical segment. Residues 110–140 (AKRFLMKSNDTILSSTDYQLEWNYCFDVHCN) are Cytoplasmic-facing. The chain crosses the membrane as a helical span at residues 141–161 (SFFPSFVLLYVIQLFLLPVIT). Residues 162–175 (RDNFISLFMGNTLY) are Lumenal-facing. Residues 176–196 (LVALCYYSYLTFIGYQILPFL) form a helical membrane-spanning segment. The Cytoplasmic portion of the chain corresponds to 197–201 (KNTHA). The chain crosses the membrane as a helical span at residues 202-222 (LLLPIPMFFIMWALSLLGFNV). Over 223-235 (PKHVVDVYFGKSA) the chain is Lumenal.

This sequence belongs to the unc-50 family.

Its subcellular location is the endoplasmic reticulum membrane. In terms of biological role, has a role in meiosis. In Schizosaccharomyces pombe (strain 972 / ATCC 24843) (Fission yeast), this protein is Protein GMH1 homolog (mug16).